The chain runs to 286 residues: Transcription initiation factor IIA large subunit (286 aa).

Disordered stretches follow at residues 120–145 (NTVE…ADVT), 167–195 (TVEN…KEKE), and 208–236 (KRSA…EGEE). Basic and acidic residues predominate over residues 175 to 195 (SEKKDDEEKEEDVEKTRKEKE). The segment covering 214–236 (DTDEVGSELDDSDDDYLISEGEE) has biased composition (acidic residues).

This sequence belongs to the TFIIA subunit 1 family. In terms of assembly, TFIIA is a heterodimer composed of the large TOA1 and a small TOA2 subunits. Interacts with KAP122.

Its subcellular location is the cytoplasm. It is found in the nucleus. Its function is as follows. TFIIA is a component of the transcription machinery of RNA polymerase II and implicated in the regulation of basal transcription. Interacts with TBP (the TATA-binding protein). The protein is Transcription initiation factor IIA large subunit (TOA1) of Saccharomyces cerevisiae (strain ATCC 204508 / S288c) (Baker's yeast).